The following is a 90-amino-acid chain: Mitochondrial import inner membrane translocase subunit Tim10 (90 aa).

The short motif at 29–54 is the Twin CX3C motif element; sequence CHRKCVPPHYKEAELSKGESVCLDRC. 2 disulfides stabilise this stretch: Cys-29–Cys-54 and Cys-33–Cys-50.

It belongs to the small Tim family. Heterohexamer; composed of 3 copies of TIMM9 and 3 copies of TIMM10/TIM10A, named soluble 70 kDa complex. The complex forms a 6-bladed alpha-propeller structure and associates with the TIMM22 component of the TIM22 complex. Interacts with multi-pass transmembrane proteins in transit. Also forms a complex composed of TIMM9, TIMM10/TIM10A and FXC1/TIM10B.

It is found in the mitochondrion inner membrane. Its function is as follows. Mitochondrial intermembrane chaperone that participates in the import and insertion of multi-pass transmembrane proteins into the mitochondrial inner membrane. May also be required for the transfer of beta-barrel precursors from the TOM complex to the sorting and assembly machinery (SAM complex) of the outer membrane. Acts as a chaperone-like protein that protects the hydrophobic precursors from aggregation and guide them through the mitochondrial intermembrane space. The sequence is that of Mitochondrial import inner membrane translocase subunit Tim10 (Timm10) from Rattus norvegicus (Rat).